Reading from the N-terminus, the 531-residue chain is Putative lipase ATG15 (531 aa).

The Cytoplasmic segment spans residues 1–11 (MKPGIKISKRY). Residues 12 to 31 (SARNASVITVLLLLIYLIYI) traverse the membrane as a helical; Signal-anchor for type II membrane protein segment. Over 32 to 531 (NKETIQTKYQ…WIGICTEYGI (500 aa)) the chain is Lumenal. N-linked (GlcNAc...) asparagine glycosylation is found at asparagine 178 and asparagine 207. Serine 340 (charge relay system) is an active-site residue. The disordered stretch occupies residues 482-513 (VPKKHKSSSSTASSTSAETSTLTVGPSPPEKT). The span at 489–502 (SSSTASSTSAETST) shows a compositional bias: low complexity.

This sequence belongs to the AB hydrolase superfamily. Lipase family. In terms of assembly, binds to both phosphatidylinositol (PI) and phosphatidylinositol 3,5-bisphosphate (PIP2).

It localises to the endosome. The protein localises to the multivesicular body membrane. Its subcellular location is the prevacuolar compartment membrane. The enzyme catalyses a triacylglycerol + H2O = a diacylglycerol + a fatty acid + H(+). Its function is as follows. Lipase which is essential for lysis of subvacuolar cytoplasm to vacuole targeted bodies and intravacuolar autophagic bodies. Involved in the lysis of intravacuolar multivesicular body (MVB) vesicles. The intravacuolar membrane disintegration by ATG15 is critical to life span extension. This Kluyveromyces lactis (strain ATCC 8585 / CBS 2359 / DSM 70799 / NBRC 1267 / NRRL Y-1140 / WM37) (Yeast) protein is Putative lipase ATG15 (ATG15).